The following is a 503-amino-acid chain: ATP synthase subunit alpha (503 aa).

170 to 177 (GDKQTGKT) is a binding site for ATP.

Belongs to the ATPase alpha/beta chains family. F-type ATPases have 2 components, CF(1) - the catalytic core - and CF(0) - the membrane proton channel. CF(1) has five subunits: alpha(3), beta(3), gamma(1), delta(1), epsilon(1). CF(0) has three main subunits: a(1), b(2) and c(9-12). The alpha and beta chains form an alternating ring which encloses part of the gamma chain. CF(1) is attached to CF(0) by a central stalk formed by the gamma and epsilon chains, while a peripheral stalk is formed by the delta and b chains.

It is found in the cell inner membrane. It catalyses the reaction ATP + H2O + 4 H(+)(in) = ADP + phosphate + 5 H(+)(out). Its function is as follows. Produces ATP from ADP in the presence of a proton gradient across the membrane. The alpha chain is a regulatory subunit. The protein is ATP synthase subunit alpha of Helicobacter pylori (strain Shi470).